Consider the following 179-residue polypeptide: Ribosome maturation factor RimM (179 aa).

The 77-residue stretch at 100–176 (KEEFHLLELI…FVIINPPNGL (77 aa)) folds into the PRC barrel domain.

The protein belongs to the RimM family. In terms of assembly, binds ribosomal protein uS19.

The protein localises to the cytoplasm. In terms of biological role, an accessory protein needed during the final step in the assembly of 30S ribosomal subunit, possibly for assembly of the head region. Essential for efficient processing of 16S rRNA. May be needed both before and after RbfA during the maturation of 16S rRNA. It has affinity for free ribosomal 30S subunits but not for 70S ribosomes. The protein is Ribosome maturation factor RimM of Prochlorococcus marinus (strain MIT 9301).